We begin with the raw amino-acid sequence, 442 residues long: Trigger factor (442 aa).

The 86-residue stretch at 165–250 folds into the PPIase FKBP-type domain; that stretch reads DDRVIIDFEG…LQKVMAPELP (86 aa).

This sequence belongs to the FKBP-type PPIase family. Tig subfamily.

It localises to the cytoplasm. The catalysed reaction is [protein]-peptidylproline (omega=180) = [protein]-peptidylproline (omega=0). Involved in protein export. Acts as a chaperone by maintaining the newly synthesized protein in an open conformation. Functions as a peptidyl-prolyl cis-trans isomerase. The sequence is that of Trigger factor from Coxiella burnetii (strain CbuK_Q154) (Coxiella burnetii (strain Q154)).